A 314-amino-acid polypeptide reads, in one-letter code: Methionyl-tRNA formyltransferase (314 aa).

S110–P113 contacts (6S)-5,6,7,8-tetrahydrofolate.

The protein belongs to the Fmt family.

It carries out the reaction L-methionyl-tRNA(fMet) + (6R)-10-formyltetrahydrofolate = N-formyl-L-methionyl-tRNA(fMet) + (6S)-5,6,7,8-tetrahydrofolate + H(+). In terms of biological role, attaches a formyl group to the free amino group of methionyl-tRNA(fMet). The formyl group appears to play a dual role in the initiator identity of N-formylmethionyl-tRNA by promoting its recognition by IF2 and preventing the misappropriation of this tRNA by the elongation apparatus. The protein is Methionyl-tRNA formyltransferase of Bacillus cereus (strain B4264).